The following is a 655-amino-acid chain: HDA1 complex subunit 3 (655 aa).

Residues 482–632 (HELEVENNLK…KTMDNLENLT (151 aa)) are a coiled coil. Residues 635 to 655 (RVRTQNGNTKKKSRAKKPGNV) are disordered. Basic residues predominate over residues 643-655 (TKKKSRAKKPGNV).

This sequence belongs to the HDA2/3 family. HDA3 subfamily. In terms of assembly, heterodimer with HDA2. Component of the HDA1 histone deacetylase complex composed of at least one HDA1 homodimer and one HDA2/HDA3 heterodimer. Interacts with HDA1 and HDA3.

Its subcellular location is the nucleus. Its function is as follows. Required for activity of HDA1 histone deacetylase complex. The HDA1 histone deacetylase complex is responsible for the deacetylation of lysine residues on the N-terminal part of the core histones (H2A, H2B, H3 and H4). Histone deacetylation gives a tag for epigenetic repression and plays an important role in transcriptional regulation, cell cycle progression and developmental events. This Saccharomyces cerevisiae (strain ATCC 204508 / S288c) (Baker's yeast) protein is HDA1 complex subunit 3 (HDA3).